Reading from the N-terminus, the 93-residue chain is Translation initiation factor IF-1 (93 aa).

Residues 1-72 form the S1-like domain; it reads MAKEELIQFE…EKGRLIFRHK (72 aa). The interval 69–93 is disordered; it reads FRHKDERPSGAPRGGPPRGGQFRRR.

This sequence belongs to the IF-1 family. Component of the 30S ribosomal translation pre-initiation complex which assembles on the 30S ribosome in the order IF-2 and IF-3, IF-1 and N-formylmethionyl-tRNA(fMet); mRNA recruitment can occur at any time during PIC assembly.

The protein resides in the cytoplasm. Its function is as follows. One of the essential components for the initiation of protein synthesis. Stabilizes the binding of IF-2 and IF-3 on the 30S subunit to which N-formylmethionyl-tRNA(fMet) subsequently binds. Helps modulate mRNA selection, yielding the 30S pre-initiation complex (PIC). Upon addition of the 50S ribosomal subunit IF-1, IF-2 and IF-3 are released leaving the mature 70S translation initiation complex. This Nitrobacter hamburgensis (strain DSM 10229 / NCIMB 13809 / X14) protein is Translation initiation factor IF-1.